Reading from the N-terminus, the 1342-residue chain is DNA-directed RNA polymerase subunit beta (1342 aa).

It belongs to the RNA polymerase beta chain family. In terms of assembly, the RNAP catalytic core consists of 2 alpha, 1 beta, 1 beta' and 1 omega subunit. When a sigma factor is associated with the core the holoenzyme is formed, which can initiate transcription.

The enzyme catalyses RNA(n) + a ribonucleoside 5'-triphosphate = RNA(n+1) + diphosphate. In terms of biological role, DNA-dependent RNA polymerase catalyzes the transcription of DNA into RNA using the four ribonucleoside triphosphates as substrates. The sequence is that of DNA-directed RNA polymerase subunit beta from Aliivibrio fischeri (strain MJ11) (Vibrio fischeri).